Consider the following 457-residue polypeptide: Multidrug resistance protein MdtK (457 aa).

A run of 12 helical transmembrane segments spans residues 11-31 (LLAL…MGFV), 53-73 (IWLP…PVVA), 93-113 (WLAG…GYII), 127-147 (AVGY…FQVA), 160-180 (GMVM…IFIY), 191-211 (VGCG…MLWW), 243-263 (LPIA…ALLV), 276-296 (IALN…AAVT), 316-336 (RTGV…TVLM), 350-370 (VVLL…SDSI), 387-407 (IFFI…YLLA), and 418-438 (PAGF…MMML).

This sequence belongs to the multi antimicrobial extrusion (MATE) (TC 2.A.66.1) family. MdtK subfamily.

Its subcellular location is the cell inner membrane. Its function is as follows. Multidrug efflux pump that functions probably as a Na(+)/drug antiporter. This Klebsiella pneumoniae (strain 342) protein is Multidrug resistance protein MdtK.